The chain runs to 318 residues: MNELEQLRQFTTVVADTGDFQLMKQYKPQDATTNPSLIFKAVQKPEYRPLLEQAVRDHHGNSGLDGVMDQLLIAFGCEILAIVPGRVSTEVDARLSFDTEATVAKARHLIGLYEQRGVARERVLIKIASTWEGIRAAEVLQRENIRCNMTLLFSLAQAVACAEAGAQLISPFVGRILDWYKKQAGEKWDPVANGGENDPGVRSVRQIYDYYKKFGYATEVMGASFRGTDQILSLAGCDLLTISPELLEQLAGGQSAVALKLSVEQAQAGNVARIAADEPAFRWQLNEDAMATEKLSEGIRLFAADAVKLEKLVGELAS.

K126 functions as the Schiff-base intermediate with substrate in the catalytic mechanism.

This sequence belongs to the transaldolase family. Type 1 subfamily. As to quaternary structure, homodimer.

It is found in the cytoplasm. The enzyme catalyses D-sedoheptulose 7-phosphate + D-glyceraldehyde 3-phosphate = D-erythrose 4-phosphate + beta-D-fructose 6-phosphate. It functions in the pathway carbohydrate degradation; pentose phosphate pathway; D-glyceraldehyde 3-phosphate and beta-D-fructose 6-phosphate from D-ribose 5-phosphate and D-xylulose 5-phosphate (non-oxidative stage): step 2/3. Transaldolase is important for the balance of metabolites in the pentose-phosphate pathway. The sequence is that of Transaldolase from Cupriavidus metallidurans (strain ATCC 43123 / DSM 2839 / NBRC 102507 / CH34) (Ralstonia metallidurans).